The chain runs to 396 residues: Probable sugar efflux transporter (396 aa).

Helical transmembrane passes span V15–L35, V50–L70, L81–F101, V103–A123, A136–I156, T169–P189, P209–Y229, F246–G266, S275–A295, L301–V321, V333–G353, and A364–F384.

It belongs to the major facilitator superfamily. SotB (TC 2.A.1.2) family.

The protein resides in the cell inner membrane. Functionally, involved in the efflux of sugars. The physiological role may be the reduction of the intracellular concentration of toxic sugars or sugar metabolites. The chain is Probable sugar efflux transporter from Salmonella paratyphi C (strain RKS4594).